A 1568-amino-acid polypeptide reads, in one-letter code: Agglutinin-like protein 7 (1568 aa).

The first 18 residues, 1–18, serve as a signal peptide directing secretion; sequence MKKLYLLYLLASFTTVIS. Cystine bridges form between Cys-74–Cys-151, Cys-97–Cys-113, Cys-206–Cys-299, and Cys-228–Cys-257. 4 ALS repeats span residues 403 to 434, 441 to 471, 476 to 507, and 512 to 543; these read TTLTTYWQESSTATTTYFDDIDLVDTVIVKIP, ITTQFWSGKYLTTETHKEPPLGTDSVIIKEP, VTTTEFWSESFATTETITNNPEGTDSVIIKEP, and VTTTKFWSESFATTETITTGPLGTDSIVIHDP. 3 disordered regions span residues 546–662, 721–743, and 767–832; these read ESSS…SSSS, LSSDTSSYYPSSTISPSDDFPHT, and VSLT…SIPT. Low complexity-rich tracts occupy residues 547 to 662, 721 to 738, 768 to 793, and 801 to 824; these read SSSS…SSSS, LSSDTSSYYPSSTISPSD, SLTSDPASSFDSSSRLNSDSSSSPST, and SSSFSTLIKSSESRESSSGTILSE. N-linked (GlcNAc...) asparagine glycosylation is present at Asn-559. Asn-851 is a glycosylation site (N-linked (GlcNAc...) asparagine). Disordered regions lie at residues 860–1030 and 1046–1097; these read VVSS…VASE and EVVS…ENSD. Residues 872-904 show a composition bias toward low complexity; that stretch reads ESSVSVTSESSESVTSESVASESVTSESVTAVS. The span at 909 to 918 shows a compositional bias: polar residues; that stretch reads LYTTSEEVST. Over residues 919-945 the composition is skewed to low complexity; that stretch reads SDSNSGMSSPIPSSEQRSSIPIMSSSD. A compositionally biased stretch (polar residues) spans 956–992; the sequence is GTILSEESSDSIPTTFSTRYWSPSGMSSRHYTNSTET. An N-linked (GlcNAc...) asparagine glycan is attached at Asn-988. Composition is skewed to low complexity over residues 993–1002 and 1009–1030; these read SVSDVVSSSV and ESSVSVISESSESVTSESVASE. The segment covering 1046–1062 has biased composition (polar residues); the sequence is EVVSTSDSKIVPSTSVP. Positions 1063 to 1077 are enriched in low complexity; sequence SSEQRSSIPIMSSSD. Residue Asn-1188 is glycosylated (N-linked (GlcNAc...) asparagine). 2 disordered regions span residues 1194–1220 and 1271–1305; these read LGMSNSDDGLSEDTRSSSVAGKEEIEL and GLSDSDTFPSENSNRSRSFKESTDNTISISRESLG. Polar residues-rich tracts occupy residues 1272–1286 and 1294–1303; these read LSDSDTFPSENSNRS and DNTISISRES. Residue Asn-1284 is glycosylated (N-linked (GlcNAc...) asparagine). The GPI-anchor amidated serine moiety is linked to residue Ser-1548. The propeptide at 1549-1568 is removed in mature form; it reads GSVSKYSLWMMAFYMLFGLF.

It belongs to the ALS family. Post-translationally, the GPI-anchor is attached to the protein in the endoplasmic reticulum and serves to target the protein to the cell surface. There, the glucosamine-inositol phospholipid moiety is cleaved off and the GPI-modified mannoprotein is covalently attached via its lipidless GPI glycan remnant to the 1,6-beta-glucan of the outer cell wall layer.

It is found in the cell membrane. Its subcellular location is the secreted. The protein resides in the cell wall. Its function is as follows. Cell surface adhesion protein which mediates both yeast-to-host tissue adherence and yeast aggregation. Plays an important role in the pathogenesis of C.albicans infections. In Candida albicans (strain SC5314 / ATCC MYA-2876) (Yeast), this protein is Agglutinin-like protein 7 (ALS7).